A 279-amino-acid chain; its full sequence is Phosphatidylglycerol--prolipoprotein diacylglyceryl transferase (279 aa).

A run of 7 helical transmembrane segments spans residues 14-34 (IAFS…ACAI), 62-82 (YFLW…ILIY), 106-126 (FVGI…IASY), 136-156 (LLIY…FGRI), 190-210 (PSQL…VMWA), 218-238 (GLLI…AEFY), and 252-272 (LSMG…ILLY). Residue Arg-155 participates in a 1,2-diacyl-sn-glycero-3-phospho-(1'-sn-glycerol) binding.

The protein belongs to the Lgt family.

The protein localises to the cell inner membrane. The enzyme catalyses L-cysteinyl-[prolipoprotein] + a 1,2-diacyl-sn-glycero-3-phospho-(1'-sn-glycerol) = an S-1,2-diacyl-sn-glyceryl-L-cysteinyl-[prolipoprotein] + sn-glycerol 1-phosphate + H(+). Its pathway is protein modification; lipoprotein biosynthesis (diacylglyceryl transfer). Catalyzes the transfer of the diacylglyceryl group from phosphatidylglycerol to the sulfhydryl group of the N-terminal cysteine of a prolipoprotein, the first step in the formation of mature lipoproteins. The polypeptide is Phosphatidylglycerol--prolipoprotein diacylglyceryl transferase (Helicobacter pylori (strain HPAG1)).